Here is a 447-residue protein sequence, read N- to C-terminus: Methylenetetrahydrofolate--tRNA-(uracil-5-)-methyltransferase TrmFO (447 aa).

13–18 provides a ligand contact to FAD; that stretch reads GAGLAG.

It belongs to the MnmG family. TrmFO subfamily. It depends on FAD as a cofactor.

Its subcellular location is the cytoplasm. It carries out the reaction uridine(54) in tRNA + (6R)-5,10-methylene-5,6,7,8-tetrahydrofolate + NADH + H(+) = 5-methyluridine(54) in tRNA + (6S)-5,6,7,8-tetrahydrofolate + NAD(+). The catalysed reaction is uridine(54) in tRNA + (6R)-5,10-methylene-5,6,7,8-tetrahydrofolate + NADPH + H(+) = 5-methyluridine(54) in tRNA + (6S)-5,6,7,8-tetrahydrofolate + NADP(+). Its function is as follows. Catalyzes the folate-dependent formation of 5-methyl-uridine at position 54 (M-5-U54) in all tRNAs. The sequence is that of Methylenetetrahydrofolate--tRNA-(uracil-5-)-methyltransferase TrmFO from Streptococcus thermophilus (strain ATCC BAA-491 / LMD-9).